Reading from the N-terminus, the 288-residue chain is Nucleotide-binding protein PM0169 (288 aa).

Residue 8 to 15 coordinates ATP; that stretch reads GHSGAGKS. Residue 56 to 59 coordinates GTP; sequence DIRN.

It belongs to the RapZ-like family.

Displays ATPase and GTPase activities. This chain is Nucleotide-binding protein PM0169, found in Pasteurella multocida (strain Pm70).